The chain runs to 428 residues: Glutamate-1-semialdehyde 2,1-aminomutase (428 aa).

The residue at position 265 (lysine 265) is an N6-(pyridoxal phosphate)lysine.

Belongs to the class-III pyridoxal-phosphate-dependent aminotransferase family. HemL subfamily. Homodimer. Pyridoxal 5'-phosphate serves as cofactor.

Its subcellular location is the cytoplasm. The catalysed reaction is (S)-4-amino-5-oxopentanoate = 5-aminolevulinate. It functions in the pathway porphyrin-containing compound metabolism; protoporphyrin-IX biosynthesis; 5-aminolevulinate from L-glutamyl-tRNA(Glu): step 2/2. In Hamiltonella defensa subsp. Acyrthosiphon pisum (strain 5AT), this protein is Glutamate-1-semialdehyde 2,1-aminomutase.